The chain runs to 385 residues: L-arabinitol 4-dehydrogenase (385 aa).

Zn(2+) is bound by residues C54, H79, E80, C109, C112, C115, C123, and E164. NAD(+) is bound by residues 191–192 (PI), D212, R217, I292, and 316–318 (QYR).

Belongs to the zinc-containing alcohol dehydrogenase family. In terms of assembly, homotetramer. Zn(2+) is required as a cofactor.

It catalyses the reaction L-arabinitol + NAD(+) = L-xylulose + NADH + H(+). It participates in carbohydrate degradation; L-arabinose degradation via L-arabinitol; D-xylulose 5-phosphate from L-arabinose (fungal route): step 2/5. In terms of biological role, catalyzes the NAD-dependent oxidation of L-arabinitol to L-xylulose in the fungal L-arabinose catabolic pathway. L-arabinose catabolism is important for using plant material as a carbon source. NADP cannot act as a cosubstrate. The protein is L-arabinitol 4-dehydrogenase (lad1) of Penicillium rubens (strain ATCC 28089 / DSM 1075 / NRRL 1951 / Wisconsin 54-1255) (Penicillium chrysogenum).